We begin with the raw amino-acid sequence, 559 residues long: Urocanate hydratase (559 aa).

NAD(+) contacts are provided by residues 49–50 (GG), Q127, 173–175 (GMG), D193, R198, 239–240 (NA), 260–264 (QTSAH), 270–271 (YL), and Y319. C407 is an active-site residue. G489 contacts NAD(+).

It belongs to the urocanase family. NAD(+) serves as cofactor.

Its subcellular location is the cytoplasm. It catalyses the reaction 4-imidazolone-5-propanoate = trans-urocanate + H2O. Its pathway is amino-acid degradation; L-histidine degradation into L-glutamate; N-formimidoyl-L-glutamate from L-histidine: step 2/3. Catalyzes the conversion of urocanate to 4-imidazolone-5-propionate. The protein is Urocanate hydratase of Shouchella clausii (strain KSM-K16) (Alkalihalobacillus clausii).